The chain runs to 159 residues: MGLTTNIVGMHYRYPDHYEVEREKIREYAVAVQNEDTSYFEEDAAAELGYKGLLAPLTFICLFGYKAQSAFFKHANIAVTDQQIVQIDQVLKFVKPIVAGDKLYCDVYVDSMREAHGTQIIVTKNVVTNEVGDIVQETYTTLAGRVGEGGEEGFSDGAA.

Belongs to the UPF0336 family.

This chain is UPF0336 protein ML1910, found in Mycobacterium leprae (strain TN).